We begin with the raw amino-acid sequence, 181 residues long: Probable calcium-binding protein CML43 (181 aa).

EF-hand domains follow at residues 24-59 (LNAL…LGLD), 107-142 (SPES…LGLP), and 145-180 (GEIE…VVVP). Aspartate 37, asparagine 39, aspartate 41, glutamate 48, aspartate 120, aspartate 122, aspartate 124, glutamate 131, aspartate 158, asparagine 160, aspartate 162, arginine 164, and glutamate 169 together coordinate Ca(2+).

As to expression, expressed specifically in roots.

Calcium-binding protein that may mediate calcium-dependent signal during plant defense response. In Arabidopsis thaliana (Mouse-ear cress), this protein is Probable calcium-binding protein CML43 (CML43).